The sequence spans 395 residues: ATP phosphoribosyltransferase regulatory subunit (395 aa).

The protein belongs to the class-II aminoacyl-tRNA synthetase family. HisZ subfamily. As to quaternary structure, heteromultimer composed of HisG and HisZ subunits.

The protein localises to the cytoplasm. Its pathway is amino-acid biosynthesis; L-histidine biosynthesis; L-histidine from 5-phospho-alpha-D-ribose 1-diphosphate: step 1/9. Required for the first step of histidine biosynthesis. May allow the feedback regulation of ATP phosphoribosyltransferase activity by histidine. This Pseudomonas fluorescens (strain ATCC BAA-477 / NRRL B-23932 / Pf-5) protein is ATP phosphoribosyltransferase regulatory subunit.